A 320-amino-acid polypeptide reads, in one-letter code: Phosphate acetyltransferase (320 aa).

This sequence belongs to the phosphate acetyltransferase and butyryltransferase family.

The protein resides in the cytoplasm. The enzyme catalyses acetyl-CoA + phosphate = acetyl phosphate + CoA. Its pathway is metabolic intermediate biosynthesis; acetyl-CoA biosynthesis; acetyl-CoA from acetate: step 2/2. The protein is Phosphate acetyltransferase (pta) of Mycoplasma pneumoniae (strain ATCC 29342 / M129 / Subtype 1) (Mycoplasmoides pneumoniae).